Here is a 234-residue protein sequence, read N- to C-terminus: Putative B3 domain-containing protein At2g18810 (234 aa).

Positions 55-88 (CKNQDPEQNPNRVASSPSLCHVKSKRPQKGVSNK) are disordered. Over residues 60–72 (PEQNPNRVASSPS) the composition is skewed to polar residues. The segment at residues 87-185 (NKPILDMDFL…MLFFALVLSD (99 aa)) is a DNA-binding region (TF-B3).

Its subcellular location is the nucleus. The polypeptide is Putative B3 domain-containing protein At2g18810 (Arabidopsis thaliana (Mouse-ear cress)).